Consider the following 511-residue polypeptide: Putative thymidine phosphorylase (511 aa).

It belongs to the thymidine/pyrimidine-nucleoside phosphorylase family. Type 2 subfamily.

It catalyses the reaction thymidine + phosphate = 2-deoxy-alpha-D-ribose 1-phosphate + thymine. This is Putative thymidine phosphorylase from Polaromonas sp. (strain JS666 / ATCC BAA-500).